A 338-amino-acid chain; its full sequence is Biotin synthase (338 aa).

Residues Asp45 to Arg272 form the Radical SAM core domain. Residues Cys60, Cys64, and Cys67 each coordinate [4Fe-4S] cluster. 4 residues coordinate [2Fe-2S] cluster: Cys104, Cys135, Cys195, and Arg267.

Belongs to the radical SAM superfamily. Biotin synthase family. Homodimer. [4Fe-4S] cluster serves as cofactor. [2Fe-2S] cluster is required as a cofactor.

It carries out the reaction (4R,5S)-dethiobiotin + (sulfur carrier)-SH + 2 reduced [2Fe-2S]-[ferredoxin] + 2 S-adenosyl-L-methionine = (sulfur carrier)-H + biotin + 2 5'-deoxyadenosine + 2 L-methionine + 2 oxidized [2Fe-2S]-[ferredoxin]. It functions in the pathway cofactor biosynthesis; biotin biosynthesis; biotin from 7,8-diaminononanoate: step 2/2. Catalyzes the conversion of dethiobiotin (DTB) to biotin by the insertion of a sulfur atom into dethiobiotin via a radical-based mechanism. The sequence is that of Biotin synthase from Parvibaculum lavamentivorans (strain DS-1 / DSM 13023 / NCIMB 13966).